Consider the following 305-residue polypeptide: ATP synthase gamma chain (305 aa).

It belongs to the ATPase gamma chain family. In terms of assembly, F-type ATPases have 2 components, CF(1) - the catalytic core - and CF(0) - the membrane proton channel. CF(1) has five subunits: alpha(3), beta(3), gamma(1), delta(1), epsilon(1). CF(0) has three main subunits: a, b and c.

The protein localises to the cell membrane. Its function is as follows. Produces ATP from ADP in the presence of a proton gradient across the membrane. The gamma chain is believed to be important in regulating ATPase activity and the flow of protons through the CF(0) complex. This is ATP synthase gamma chain from Streptomyces avermitilis (strain ATCC 31267 / DSM 46492 / JCM 5070 / NBRC 14893 / NCIMB 12804 / NRRL 8165 / MA-4680).